A 391-amino-acid polypeptide reads, in one-letter code: Inositol-tetrakisphosphate 1-kinase 2 (391 aa).

The 1D-myo-inositol 1,3,4-trisphosphate site is built by K90 and K132. The ATP site is built by R167 and K217. Residues K178–Y384 form the ATP-grasp domain. 1D-myo-inositol 1,3,4-trisphosphate is bound by residues H228 and K260. Residues Q249–K260 and S275 each bind ATP. Mg(2+) is bound by residues D340, D355, and N357. N357 contacts 1D-myo-inositol 1,3,4-trisphosphate.

This sequence belongs to the ITPK1 family. As to quaternary structure, monomer. It depends on Mg(2+) as a cofactor. Expressed in seedling roots, cotyledons, rosette leaves, cauline leaves, stems, flowers, siliques and seeds.

It carries out the reaction 1D-myo-inositol 3,4,5,6-tetrakisphosphate + ATP = 1D-myo-inositol 1,3,4,5,6-pentakisphosphate + ADP + H(+). The catalysed reaction is 1D-myo-inositol 1,3,4-trisphosphate + ATP = 1D-myo-inositol 1,3,4,5-tetrakisphosphate + ADP + H(+). The enzyme catalyses 1D-myo-inositol 1,3,4-trisphosphate + ATP = 1D-myo-inositol 1,3,4,6-tetrakisphosphate + ADP + H(+). Kinase that can phosphorylate various inositol polyphosphate such as Ins(3,4,5,6)P4 or Ins(1,3,4)P3. Phosphorylates Ins(3,4,5,6)P4 to form InsP5. This reaction is thought to have regulatory importance, since Ins(3,4,5,6)P4 is an inhibitor of plasma membrane Ca(2+)-activated Cl(-) channels, while Ins(1,3,4,5,6)P5 is not. Also phosphorylates Ins(1,3,4)P3 or a racemic mixture of Ins(1,4,6)P3 and Ins(3,4,6)P3 to form InsP4. Ins(1,3,4,6)P4 is an essential molecule in the hexakisphosphate (InsP6) pathway. Plays a role in seed coat development and lipid polyester barrier formation. This is Inositol-tetrakisphosphate 1-kinase 2 (ITPK2) from Arabidopsis thaliana (Mouse-ear cress).